Here is a 342-residue protein sequence, read N- to C-terminus: NAD kinase (342 aa).

Residue D66 is the Proton acceptor of the active site. Residues 66–67 (DG), R71, 141–142 (ND), K152, D171, 182–187 (TAYAFS), and A206 each bind NAD(+).

The protein belongs to the NAD kinase family. A divalent metal cation is required as a cofactor.

The protein resides in the cytoplasm. The enzyme catalyses NAD(+) + ATP = ADP + NADP(+) + H(+). Functionally, involved in the regulation of the intracellular balance of NAD and NADP, and is a key enzyme in the biosynthesis of NADP. Catalyzes specifically the phosphorylation on 2'-hydroxyl of the adenosine moiety of NAD to yield NADP. The polypeptide is NAD kinase (Bifidobacterium longum (strain NCC 2705)).